The following is a 463-amino-acid chain: uncharacterized protein (463 aa).

This is an uncharacterized protein from Ostreid herpesvirus 1 (isolate France) (OsHV-1).